Here is a 198-residue protein sequence, read N- to C-terminus: MAKILVLYYSMYGHIETMAHAVAEGAKKVDGAEVIIKRVPETMPPEIFAKAGGKTQNAPVATPQELADYDAIIFGTPTRFGNMSGQMRTFLDQTGGLWASGALYGKLGSVFSSTGTGGGQEQTITSTWTTLAHHGMVIVPIGYAAQELFDVSQVRGGTPYGATTIAGGDGSRQPSQEELSIARYQGEYVAGLAVKLNG.

The Flavodoxin-like domain occupies 4-189 (ILVLYYSMYG…SIARYQGEYV (186 aa)). Residues 10-15 (SMYGHI) and 78-80 (TRF) contribute to the FMN site. Tyrosine 12 contacts NAD(+). Tryptophan 98 is a binding site for substrate. FMN contacts are provided by residues 113–118 (STGTGG) and histidine 133.

It belongs to the WrbA family. FMN is required as a cofactor.

It catalyses the reaction a quinone + NADH + H(+) = a quinol + NAD(+). It carries out the reaction a quinone + NADPH + H(+) = a quinol + NADP(+). In Salmonella agona (strain SL483), this protein is NAD(P)H dehydrogenase (quinone).